A 699-amino-acid chain; its full sequence is (E2-independent) E3 ubiquitin-conjugating enzyme FATS (699 aa).

The tract at residues 48–116 (MISSIVISQM…LGIPAPSDER (69 aa)) is required for interaction with p53/TP53. 3 disordered regions span residues 107 to 134 (LGIP…GGPR), 443 to 473 (KPTR…ERRH), and 528 to 569 (KSED…PARS). Basic and acidic residues-rich tracts occupy residues 113 to 129 (SDER…EERP) and 460 to 473 (CLSR…ERRH). The tract at residues 116–224 (RGPEAELPPK…GLCERRKYWV (109 aa)) is required for interaction with HDAC1. Residues 534-545 (TPEPSPAAPSPA) are compositionally biased toward pro residues. The segment at 571 to 699 (TLQEALEVRK…LDQLLQRNAV (129 aa)) is ALMS motif.

In terms of assembly, interacts with HDAC1; the interaction prevents binding of HDAC1 to CDKN1A/p21 and facilitates the acetylation and stabilization of CDKN1A/p21. Interacts with p53/TP53; the interaction inhibits binding of p53/TP53 and MDM2.

It is found in the cytoplasm. The protein resides in the cytoskeleton. Its subcellular location is the microtubule organizing center. The protein localises to the centrosome. Tumor suppressor that is required to sustain G2/M checkpoint after DNA damage. Acts as a p53/TP53 activator by inhibiting MDM2 binding to p53/TP53 and stimulating non-proteolytic polyubiquitination of p53/TP53. Exhibits ubiquitin ligase (E3) activity and assemble ubiquitin polymers through 'Lys-11'- (K11-), 'Lys-29'- (K29-) and 'Lys-63'- (K63)-linkages, independently of the ubiquitin-conjugating enzyme (E2). Promotes p53/TP53-dependent transcription of CDKN1A/p21, leading to robust checkpoint response. Mediates CDKN1A/p21 protein stability in a ubiquitin-independent manner. Interacts with HDAC1 and prevents binding of HDAC1 to CDKN1A/p21 and facilitates the acetylation and stabilization of CDKN1A/p21. May have a role in the assembly of primary cilia. This Homo sapiens (Human) protein is (E2-independent) E3 ubiquitin-conjugating enzyme FATS.